The sequence spans 434 residues: Nicotinate phosphoribosyltransferase (434 aa).

Position 242 is a phosphohistidine; by autocatalysis (His-242).

The protein belongs to the NAPRTase family. Post-translationally, transiently phosphorylated on a His residue during the reaction cycle. Phosphorylation strongly increases the affinity for substrates and increases the rate of nicotinate D-ribonucleotide production. Dephosphorylation regenerates the low-affinity form of the enzyme, leading to product release.

It carries out the reaction nicotinate + 5-phospho-alpha-D-ribose 1-diphosphate + ATP + H2O = nicotinate beta-D-ribonucleotide + ADP + phosphate + diphosphate. Its pathway is cofactor biosynthesis; NAD(+) biosynthesis; nicotinate D-ribonucleotide from nicotinate: step 1/1. In terms of biological role, catalyzes the synthesis of beta-nicotinate D-ribonucleotide from nicotinate and 5-phospho-D-ribose 1-phosphate at the expense of ATP. The polypeptide is Nicotinate phosphoribosyltransferase (Bradyrhizobium diazoefficiens (strain JCM 10833 / BCRC 13528 / IAM 13628 / NBRC 14792 / USDA 110)).